The following is a 213-amino-acid chain: Glycerol-3-phosphate acyltransferase (213 aa).

The next 5 helical transmembrane spans lie at 3–23 (ILLA…VVVS), 51–71 (KAAI…VWLA), 78–98 (DVAI…PVFF), 115–135 (AVHP…AFFF), and 140–160 (LAAL…FGMP).

This sequence belongs to the PlsY family. In terms of assembly, probably interacts with PlsX.

It localises to the cell inner membrane. It catalyses the reaction an acyl phosphate + sn-glycerol 3-phosphate = a 1-acyl-sn-glycero-3-phosphate + phosphate. The protein operates within lipid metabolism; phospholipid metabolism. Functionally, catalyzes the transfer of an acyl group from acyl-phosphate (acyl-PO(4)) to glycerol-3-phosphate (G3P) to form lysophosphatidic acid (LPA). This enzyme utilizes acyl-phosphate as fatty acyl donor, but not acyl-CoA or acyl-ACP. This is Glycerol-3-phosphate acyltransferase from Burkholderia cenocepacia (strain HI2424).